A 135-amino-acid chain; its full sequence is Large ribosomal subunit protein bL17 (135 aa).

The protein belongs to the bacterial ribosomal protein bL17 family. In terms of assembly, part of the 50S ribosomal subunit. Contacts protein L32.

This chain is Large ribosomal subunit protein bL17, found in Listeria monocytogenes serotype 4b (strain CLIP80459).